Consider the following 392-residue polypeptide: Stilbene synthase 1 (392 aa).

55–58 provides a ligand contact to substrate; it reads KFNR. The active site involves Cys164. Substrate contacts are provided by residues Leu267 and 305-307; that span reads GGP.

The protein belongs to the thiolase-like superfamily. Chalcone/stilbene synthases family. As to quaternary structure, homodimer. As to expression, in leaves, expressed in palisade and spongy parenchyma cells and, to a lesser extent, in epidermal cells after induction.

Its subcellular location is the cytoplasm. The enzyme catalyses 4-coumaroyl-CoA + 3 malonyl-CoA + 3 H(+) = trans-resveratrol + 4 CO2 + 4 CoA. Its pathway is phytoalexin biosynthesis; 3,4',5-trihydroxystilbene biosynthesis; 3,4',5-trihydroxystilbene from trans-4-coumarate: step 2/2. Its function is as follows. Mediates resistance to pathogens which are sensitive to stilbenes such as Botrytis cinerea, Eutypa lata and Plasmopora viticola by enhancing the production of phytoalexins. Confers resistance to Phytophthora palmivora when expressed in papaya. The polypeptide is Stilbene synthase 1 (VINST1) (Vitis vinifera (Grape)).